Here is a 444-residue protein sequence, read N- to C-terminus: Tubulin beta-4 chain (444 aa).

The GTP site is built by Q11, E69, S138, G142, T143, G144, N204, and N226. Residue E69 participates in Mg(2+) binding.

It belongs to the tubulin family. As to quaternary structure, dimer of alpha and beta chains. A typical microtubule is a hollow water-filled tube with an outer diameter of 25 nm and an inner diameter of 15 nM. Alpha-beta heterodimers associate head-to-tail to form protofilaments running lengthwise along the microtubule wall with the beta-tubulin subunit facing the microtubule plus end conferring a structural polarity. Microtubules usually have 13 protofilaments but different protofilament numbers can be found in some organisms and specialized cells. Requires Mg(2+) as cofactor.

The protein localises to the cytoplasm. It localises to the cytoskeleton. Functionally, tubulin is the major constituent of microtubules, a cylinder consisting of laterally associated linear protofilaments composed of alpha- and beta-tubulin heterodimers. Microtubules grow by the addition of GTP-tubulin dimers to the microtubule end, where a stabilizing cap forms. Below the cap, tubulin dimers are in GDP-bound state, owing to GTPase activity of alpha-tubulin. The chain is Tubulin beta-4 chain (TUBB4) from Arabidopsis thaliana (Mouse-ear cress).